The sequence spans 535 residues: Sodium channel protein Nach (535 aa).

Residues 1–49 lie on the Cytoplasmic side of the membrane; the sequence is MGHQEELKPEQVDLKVTPFVGYLRRTWSDFCATSSIHGLKYTRDEDTNK. A helical membrane pass occupies residues 50 to 70; the sequence is IVHLVWLLISVVMFICAVVMA. Residues 71 to 471 lie on the Extracellular side of the membrane; the sequence is RTFYMDYRSS…LVSNLGSAFS (401 aa). N-linked (GlcNAc...) asparagine glycans are attached at residues asparagine 165, asparagine 239, and asparagine 367. The chain crosses the membrane as a helical span at residues 472–492; that stretch reads LFVGMSMLSVVEIIYYFSVIL. Over 493–535 the chain is Cytoplasmic; it reads RKNYKLECETRSQMLHKKPKFAWPKANDTHSKEQKSVFIIHKS.

Belongs to the amiloride-sensitive sodium channel (TC 1.A.6) family. In terms of tissue distribution, embryonic and larval tracheal system; dorsal trunk (but not at fusion with transverse connective), several branches and terminal cells. Also expressed in adult tracheal system; dorsal trunk, but not at the spiracles.

It is found in the membrane. Functionally, part of a complex that plays a role in tracheal liquid clearance. Probable role in sodium transport. This is Sodium channel protein Nach (Nach) from Drosophila melanogaster (Fruit fly).